Consider the following 145-residue polypeptide: Large ribosomal subunit protein uL15 (145 aa).

The interval 1 to 52 is disordered; that stretch reads MRLNTLSPAAGSKRVKHRPGRGIGSGLGKTGGRGVKGQTSRSGGGKVRNGFE. 2 stretches are compositionally biased toward gly residues: residues 21–35 and 42–52; these read RGIG…GRGV and SGGGKVRNGFE.

Belongs to the universal ribosomal protein uL15 family. In terms of assembly, part of the 50S ribosomal subunit.

In terms of biological role, binds to the 23S rRNA. This is Large ribosomal subunit protein uL15 from Aeromonas hydrophila subsp. hydrophila (strain ATCC 7966 / DSM 30187 / BCRC 13018 / CCUG 14551 / JCM 1027 / KCTC 2358 / NCIMB 9240 / NCTC 8049).